The chain runs to 112 residues: Protein ORF1 (112 aa).

Residues Met1–Gly10 show a composition bias toward low complexity. Residues Met1 to Gly20 form a disordered region. A helical transmembrane segment spans residues Ile51 to Cys71.

The protein localises to the host membrane. The protein is Protein ORF1 of Snake adenovirus serotype 1 (SnAdV-1).